A 207-amino-acid chain; its full sequence is Octanoyltransferase (207 aa).

Residues 27-203 (ADTEDELWVV…HLETQLTPKA (177 aa)) form the BPL/LPL catalytic domain. Substrate contacts are provided by residues 66 to 73 (RGGQITYH), 133 to 135 (SLG), and 146 to 148 (GLA). Cysteine 164 acts as the Acyl-thioester intermediate in catalysis.

The protein belongs to the LipB family.

It is found in the cytoplasm. The enzyme catalyses octanoyl-[ACP] + L-lysyl-[protein] = N(6)-octanoyl-L-lysyl-[protein] + holo-[ACP] + H(+). It participates in protein modification; protein lipoylation via endogenous pathway; protein N(6)-(lipoyl)lysine from octanoyl-[acyl-carrier-protein]: step 1/2. Catalyzes the transfer of endogenously produced octanoic acid from octanoyl-acyl-carrier-protein onto the lipoyl domains of lipoate-dependent enzymes. Lipoyl-ACP can also act as a substrate although octanoyl-ACP is likely to be the physiological substrate. In Neisseria gonorrhoeae (strain ATCC 700825 / FA 1090), this protein is Octanoyltransferase.